Reading from the N-terminus, the 130-residue chain is Large ribosomal subunit protein bL17 (130 aa).

The protein belongs to the bacterial ribosomal protein bL17 family. As to quaternary structure, part of the 50S ribosomal subunit. Contacts protein L32.

This Azotobacter vinelandii (strain DJ / ATCC BAA-1303) protein is Large ribosomal subunit protein bL17.